The chain runs to 335 residues: MHSHHSHSGDYSAHGTDPLDSVVDQVVNLNFHTYCLTEHIPRIEAKFIYPEEQSLGKNPEEVITKLETSFKNFMSHAQEIKTRYADRPDVRTKFIIGMEIESCDMAHIEYAKRLMKENNDILKFCVGSVHHVNGIPIDFDQQQWYNSLHSFNDNLKHFLLSYFQSQYEMLINIKPLVVGHFDLYKLFLPNDMLVNQKSGNCNEETGVPVASLDVISEWPEIYDAVVRNLQFIDSYGGAIEINTSALRKRLEEPYPSKTLCNLVKKHCGSRFVLSDDAHGVAQVGVCYDKVKKYIVDVLQLEYICYLEESQSPENLLTVKRLPISQFVNDPFWANI.

This sequence belongs to the PHP hydrolase family. HisK subfamily.

The enzyme catalyses L-histidinol phosphate + H2O = L-histidinol + phosphate. Its pathway is amino-acid biosynthesis; L-histidine biosynthesis; L-histidine from 5-phospho-alpha-D-ribose 1-diphosphate: step 8/9. The protein is Histidinol-phosphatase (HIS2) of Saccharomyces cerevisiae (strain ATCC 204508 / S288c) (Baker's yeast).